A 282-amino-acid chain; its full sequence is Pantothenate synthetase (282 aa).

ATP is bound at residue 30–37 (MGNLHEGH). Catalysis depends on His37, which acts as the Proton donor. Gln61 lines the (R)-pantoate pocket. Gln61 is a beta-alanine binding site. 149 to 152 (GEKD) is a binding site for ATP. Gln155 is a (R)-pantoate binding site. Residues Val178 and 186–189 (KSSR) contribute to the ATP site.

This sequence belongs to the pantothenate synthetase family. In terms of assembly, homodimer.

It localises to the cytoplasm. It catalyses the reaction (R)-pantoate + beta-alanine + ATP = (R)-pantothenate + AMP + diphosphate + H(+). Its pathway is cofactor biosynthesis; (R)-pantothenate biosynthesis; (R)-pantothenate from (R)-pantoate and beta-alanine: step 1/1. Functionally, catalyzes the condensation of pantoate with beta-alanine in an ATP-dependent reaction via a pantoyl-adenylate intermediate. The chain is Pantothenate synthetase from Marinobacter nauticus (strain ATCC 700491 / DSM 11845 / VT8) (Marinobacter aquaeolei).